Consider the following 124-residue polypeptide: Putative transmembrane protein FLJ36131 (124 aa).

At Met1 to Tyr2 the chain is on the cytoplasmic side. A helical membrane pass occupies residues Val3–Ile23. Residues Val24 to Ser124 are Extracellular-facing. N-linked (GlcNAc...) asparagine glycosylation occurs at Asn41.

The protein localises to the membrane. The polypeptide is Putative transmembrane protein FLJ36131 (Homo sapiens (Human)).